Consider the following 584-residue polypeptide: DNA ligase (584 aa).

Glutamate 249 lines the ATP pocket. Lysine 251 acts as the N6-AMP-lysine intermediate in catalysis. Residues arginine 256, arginine 271, glutamate 301, phenylalanine 341, arginine 416, and lysine 422 each coordinate ATP.

The protein belongs to the ATP-dependent DNA ligase family. Requires Mg(2+) as cofactor.

It carries out the reaction ATP + (deoxyribonucleotide)n-3'-hydroxyl + 5'-phospho-(deoxyribonucleotide)m = (deoxyribonucleotide)n+m + AMP + diphosphate.. In terms of biological role, DNA ligase that seals nicks in double-stranded DNA during DNA replication, DNA recombination and DNA repair. This chain is DNA ligase, found in Pyrobaculum islandicum (strain DSM 4184 / JCM 9189 / GEO3).